Consider the following 578-residue polypeptide: L-2,3-diaminopropanoate--citrate ligase (578 aa).

It belongs to the IucA/IucC family. Forms a mixture of monomer and dimer in solution.

The catalysed reaction is (S)-2,3-diaminopropanoate + citrate + ATP = 2-[(L-alanin-3-ylcarbamoyl)methyl]-2-hydroxybutanedioate + AMP + diphosphate. It functions in the pathway siderophore biosynthesis. In terms of biological role, catalyzes the synthesis of citryl-L-2,3-diaminopropionic acid from L-2,3-diaminopropionic acid (L-Dap) and citrate, the first step in staphyloferrin B biosynthesis. This is L-2,3-diaminopropanoate--citrate ligase from Staphylococcus aureus (strain NCTC 8325 / PS 47).